A 327-amino-acid polypeptide reads, in one-letter code: Ribonucleoside-diphosphate reductase small chain (327 aa).

Residues Asp70, Glu101, and His104 each contribute to the Fe cation site. The active site involves Tyr108. Fe cation-binding residues include Glu164, Glu198, and His201.

It belongs to the ribonucleoside diphosphate reductase small chain family. Heterotetramer composed of a homodimer of the large subunit (R1) and a homodimer of the small subunit (R2). Larger multisubunit protein complex are also active, composed of (R1)n(R2)n. Fe cation is required as a cofactor.

It catalyses the reaction a 2'-deoxyribonucleoside 5'-diphosphate + [thioredoxin]-disulfide + H2O = a ribonucleoside 5'-diphosphate + [thioredoxin]-dithiol. Functionally, ribonucleoside-diphosphate reductase holoenzyme provides the precursors necessary for viral DNA synthesis. Allows virus growth in non-dividing cells. Catalyzes the biosynthesis of deoxyribonucleotides from the corresponding ribonucleotides. The protein is Ribonucleoside-diphosphate reductase small chain of Ornithodoros (relapsing fever ticks).